Reading from the N-terminus, the 586-residue chain is Protein CBFA2T2 (586 aa).

The interval 1 to 95 (MVGIPGPYQF…SSSSSLANQQ (95 aa)) is disordered. Polar residues predominate over residues 56–68 (SSHSNGINHSPPT). Residues 77–90 (QRSSNGPSSSSSSS) are compositionally biased toward low complexity. The region spanning 102–197 (VRQLSKLKRF…TPSQYLAQHE (96 aa)) is the TAFH domain. Disordered regions lie at residues 204–242 (STSSPADSSELLMEMNGNGKRHSPDRREEERETAPAEPP) and 387–417 (IRKGSEHPSRQHSPSSTDSGASDSVRDFGSR). Basic and acidic residues predominate over residues 228–237 (DRREEERETA). Low complexity predominate over residues 399-409 (SPSSTDSGASD). The stretch at 429–481 (RKAEEAVNEVKRQAMSEVQKAVSEAEQKAFEMIASERARMEQTIVDAKRRAAE) forms a coiled coil. Residues cysteine 497, cysteine 500, cysteine 508, cysteine 511, cysteine 517, cysteine 521, histidine 529, and cysteine 533 each contribute to the Zn(2+) site. The MYND-type zinc-finger motif lies at 497-533 (CWNCGRKASETCSGCNIARYCGSFCQHKDWEKHHRIC). A disordered region spans residues 561–586 (SPTLERSSSATSRSSTPASVTAVDGL). Residues 566 to 586 (RSSSATSRSSTPASVTAVDGL) are compositionally biased toward low complexity.

It localises to the nucleus. May act as a transcriptional corepressor. The sequence is that of Protein CBFA2T2 (cbfa2t2) from Xenopus laevis (African clawed frog).